The primary structure comprises 145 residues: Cell division protein SepF (145 aa).

Over residues 23–41 the composition is skewed to basic and acidic residues; that stretch reads PQEVSKTKDENAKPKHETP. The interval 23–42 is disordered; that stretch reads PQEVSKTKDENAKPKHETPK.

Belongs to the SepF family. As to quaternary structure, homodimer. Interacts with FtsZ.

Its subcellular location is the cytoplasm. Its function is as follows. Cell division protein that is part of the divisome complex and is recruited early to the Z-ring. Probably stimulates Z-ring formation, perhaps through the cross-linking of FtsZ protofilaments. Its function overlaps with FtsA. The chain is Cell division protein SepF from Caldicellulosiruptor bescii (strain ATCC BAA-1888 / DSM 6725 / KCTC 15123 / Z-1320) (Anaerocellum thermophilum).